We begin with the raw amino-acid sequence, 161 residues long: Cyclic pyranopterin monophosphate synthase (161 aa).

Substrate is bound by residues 75-77 (MCH) and 115-116 (ME). Residue Asp-130 is part of the active site.

This sequence belongs to the MoaC family. As to quaternary structure, homohexamer; trimer of dimers.

The enzyme catalyses (8S)-3',8-cyclo-7,8-dihydroguanosine 5'-triphosphate = cyclic pyranopterin phosphate + diphosphate. Its pathway is cofactor biosynthesis; molybdopterin biosynthesis. Its function is as follows. Catalyzes the conversion of (8S)-3',8-cyclo-7,8-dihydroguanosine 5'-triphosphate to cyclic pyranopterin monophosphate (cPMP). The protein is Cyclic pyranopterin monophosphate synthase of Bacillus thuringiensis subsp. konkukian (strain 97-27).